We begin with the raw amino-acid sequence, 195 residues long: MELSEYVQRGIQTLADPGSFDSSAFALLLRAAFQSLLDAQADEAALDHPDLKHIDPVVLKHCHGAAATYILEAGKHRVDKSTLSTYLEDCKFDRERIELFCTEYQNNKNSLEILLGSIGRALPHITDVSWRLEYQIKTNQLHKMCRPGYLVTLNVENADSQSYPEISFSCSMEQLQDLVGKLKDASKSLERATQL.

In terms of domain architecture, COMM spans 124 to 193 (HITDVSWRLE…DASKSLERAT (70 aa)).

It belongs to the COMM domain-containing protein 3 family. Component of the commander complex consisting of the CCC subcomplex and the retriever subcomplex. Component of the CCC (COMMD/CCDC22/CCDC93) subcomplex consisting of COMMD1, COMMD2, COMMD3, COMMD4, COMMD5, COMMD6, COMMD7, COMMD8, COMMD9, COMMD10, CCDC22 and CCDC93; within the complex forms a heterodimer with COMMD2. Interacts with NFKB1/p105. Interacts with CCDC22, CCDC93, SCNN1B, CUL3, CUL4A, CUL4B, CUL5. In terms of tissue distribution, expressed in kidney collecting duct cells and in the nuclei of proximal convoluted tubule cells in the kidney cortex (at protein level).

It is found in the cytoplasm. Its subcellular location is the nucleus. Scaffold protein in the commander complex that is essential for endosomal recycling of transmembrane cargos; the commander complex is composed of the CCC subcomplex and the retriever subcomplex. May modulate activity of cullin-RING E3 ubiquitin ligase (CRL) complexes. May down-regulate activation of NF-kappa-B. Modulates Na(+) transport in epithelial cells by regulation of apical cell surface expression of amiloride-sensitive sodium channel (ENaC) subunits. This is COMM domain-containing protein 3 (Commd3) from Rattus norvegicus (Rat).